The primary structure comprises 102 residues: Small ribosomal subunit protein uS10 (102 aa).

This sequence belongs to the universal ribosomal protein uS10 family. As to quaternary structure, part of the 30S ribosomal subunit.

In terms of biological role, involved in the binding of tRNA to the ribosomes. The chain is Small ribosomal subunit protein uS10 from Staphylococcus haemolyticus (strain JCSC1435).